The chain runs to 219 residues: Poxin (219 aa).

The active-site Proton donor is His17. Residue Tyr138 is the Shared with catalytic histidine of dimeric partner of the active site. The active-site Proton acceptor; shared with catalytic histidine of dimeric partner is the Lys142.

This sequence belongs to the poxin family. Homodimer.

It carries out the reaction 2',3'-cGAMP + H2O = Gp(2'-5')Ap(3') + H(+). Nuclease that is responsible for viral evasion of host cGAS-STING innate immunity. Cleaves 2',3'-cGAMP which is produced by host cGAS following recognition of cytosolic DNA and blocks the subsequent 2',3'-cGAMP-mediated activation of TMEM173/STING, which normally spreads to adjacent cells and activates the interferon and NF-kappa-B immune responses. The protein is Poxin (OPG188) of Homo sapiens (Human).